The following is a 330-amino-acid chain: Methylthioribose-1-phosphate isomerase (330 aa).

Residues 49–51 (RGA), R83, and Q179 each bind substrate. The active-site Proton donor is the D220. 230-231 (NK) contacts substrate.

This sequence belongs to the eIF-2B alpha/beta/delta subunits family. MtnA subfamily.

The catalysed reaction is 5-(methylsulfanyl)-alpha-D-ribose 1-phosphate = 5-(methylsulfanyl)-D-ribulose 1-phosphate. The protein operates within amino-acid biosynthesis; L-methionine biosynthesis via salvage pathway; L-methionine from S-methyl-5-thio-alpha-D-ribose 1-phosphate: step 1/6. Functionally, catalyzes the interconversion of methylthioribose-1-phosphate (MTR-1-P) into methylthioribulose-1-phosphate (MTRu-1-P). This chain is Methylthioribose-1-phosphate isomerase, found in Thermus thermophilus (strain ATCC 27634 / DSM 579 / HB8).